Reading from the N-terminus, the 198-residue chain is Recombination protein RecR (198 aa).

The segment at 58-73 (CKVCQTLTDKEICPIC) adopts a C4-type zinc-finger fold. Residues 81–175 (KVIMVVENTR…KVSRIASGVP (95 aa)) form the Toprim domain.

This sequence belongs to the RecR family.

In terms of biological role, may play a role in DNA repair. It seems to be involved in an RecBC-independent recombinational process of DNA repair. It may act with RecF and RecO. The polypeptide is Recombination protein RecR (Lachnoclostridium phytofermentans (strain ATCC 700394 / DSM 18823 / ISDg) (Clostridium phytofermentans)).